The following is a 684-amino-acid chain: Methionine--tRNA ligase (684 aa).

Positions 14–24 (PYANGAIHLGH) match the 'HIGH' region motif. C145, C148, C158, and C161 together coordinate Zn(2+). The 'KMSKS' region motif lies at 330–334 (KMSKS). Residue K333 participates in ATP binding. Residues 582 to 684 (DFAKLDLRVA…CGIRPGMQVK (103 aa)) form the tRNA-binding domain.

Belongs to the class-I aminoacyl-tRNA synthetase family. MetG type 1 subfamily. As to quaternary structure, homodimer. Requires Zn(2+) as cofactor.

The protein resides in the cytoplasm. The catalysed reaction is tRNA(Met) + L-methionine + ATP = L-methionyl-tRNA(Met) + AMP + diphosphate. In terms of biological role, is required not only for elongation of protein synthesis but also for the initiation of all mRNA translation through initiator tRNA(fMet) aminoacylation. The protein is Methionine--tRNA ligase of Haemophilus ducreyi (strain 35000HP / ATCC 700724).